The sequence spans 720 residues: Calcium/calmodulin-dependent protein kinase type II (720 aa).

Positions 12-269 (YDVKEELGKG…ADQALKVPWI (258 aa)) constitute a Protein kinase domain. Residues 18 to 26 (LGKGAFSVV) and Lys41 contribute to the ATP site. Asp134 acts as the Proton acceptor in catalysis. A Phosphothreonine; by autocatalysis modification is found at Thr284. Disordered regions lie at residues 317–345 (SDST…QPTS) and 504–586 (DNLS…NLSA). 2 stretches are compositionally biased toward polar residues: residues 504–514 (DNLSASTSSDL) and 526–540 (PPST…SQTI). Low complexity predominate over residues 569 to 586 (SSSNSSTASKSSSTNLSA).

The protein belongs to the protein kinase superfamily. CAMK Ser/Thr protein kinase family. CaMK subfamily. In terms of assembly, dodecamer. Subunits are tightly packed around a central ring-shaped scaffold with extensive contacts between the regulatory segment of one kinase and the catalytic domain of another enabling cooperative activation of a subunit by the adjacent molecule. Interacts with and phosphorylates daf-16; the interaction promotes daf-16 nuclear localization. Interacts with egl-2 and tir-1. Interacts with nsy-1. Mg(2+) is required as a cofactor. Expressed in the nervous system. Observed in the ADF and AWC neurons. Position in AWC neurons is regulated by microtubules. Localized to clusters in ventral cord neurites which appear to be required for glr-1 trafficking. Also present in oocytes.

It localises to the cytoplasm. The protein localises to the cell projection. It is found in the axon. Its subcellular location is the perikaryon. It carries out the reaction L-seryl-[protein] + ATP = O-phospho-L-seryl-[protein] + ADP + H(+). It catalyses the reaction L-threonyl-[protein] + ATP = O-phospho-L-threonyl-[protein] + ADP + H(+). With respect to regulation, ca2(+)/calmodulin binding removes an autoinhibitory regulatory segment located C-terminal to the kinase domain. This releases the catalytic activity of the enzyme and makes accessible a regulatory residue Thr-284. Phosphorylation of Thr-284 by another kinase domain within the oligomeric holoenzyme keeps CaMKII active in the absence of Ca(2+)/calmodulin by preventing the rebinding of the regulatory segment to the kinase domain and by increasing the affinity of calmodulin for the enzyme. Can respond to high-frequency Ca(2+) pulses to become Ca(2+) independent. Functionally, acts in the signaling of a variety of pathways and processes. Phosphorylates 'Ser-319' of daf-16 in response to stress signals, such as heat, starvation and oxidation, which plays a role in prolonging lifespan. Required for viability under chronic osmotic stress in which it acts downstream of osr-1. Has roles in locomotion, oocyte maturation, brood size, egg laying, defecation, meiotic maturation and neuronal cell fate specification. Required for the regulation of synaptic density and neuromuscular junction morphology. Regulates the synaptic trafficking of glr-1. Bidirectional modulator of neurotransmitter release with negative modulatory effects mainly mediated via slo-1 activation. Involved in activation of ADF neurons and increased tph-1 transcription following exposure to pathogenic bacteria which leads to learned olfactory aversion to the bacteria. Implicated in the muscle regulation of spicule protraction. In conjunction with egl-2 has a role in the suppression of mating behavior under food deprivation to encourage foraging. Involved in restricting str-2 expression to only one of the two AWC neurons. May suppress the functional response to an internal pacemaker, perhaps by modulating the activity of the IP3 receptor. The protein is Calcium/calmodulin-dependent protein kinase type II (unc-43) of Caenorhabditis elegans.